The sequence spans 544 residues: Chaperonin GroEL (544 aa).

ATP contacts are provided by residues 30-33 (TLGP), Lys51, 87-91 (DGTTT), Gly415, and Asp495.

It belongs to the chaperonin (HSP60) family. Forms a cylinder of 14 subunits composed of two heptameric rings stacked back-to-back. Interacts with the co-chaperonin GroES.

It localises to the cytoplasm. It carries out the reaction ATP + H2O + a folded polypeptide = ADP + phosphate + an unfolded polypeptide.. Its function is as follows. Together with its co-chaperonin GroES, plays an essential role in assisting protein folding. The GroEL-GroES system forms a nano-cage that allows encapsulation of the non-native substrate proteins and provides a physical environment optimized to promote and accelerate protein folding. This chain is Chaperonin GroEL, found in Agrobacterium fabrum (strain C58 / ATCC 33970) (Agrobacterium tumefaciens (strain C58)).